Here is a 290-residue protein sequence, read N- to C-terminus: Endonuclease 2 (290 aa).

The first 27 residues, 1 to 27, serve as a signal peptide directing secretion; that stretch reads MANQKGLHVVMMIITVWLLYAAPNIHG. The a divalent metal cation site is built by Trp-28 and His-33. 28–33 contacts substrate; sequence WGKEGH. An intrachain disulfide couples Cys-37 to Cys-68. A divalent metal cation is bound by residues Asp-72 and His-85. Substrate contacts are provided by residues 72 to 76, 85 to 88, and 94 to 99; these read DRVKF, HYIN, and SYQYNR. 3 disulfides stabilise this stretch: Cys-93/Cys-245, Cys-101/Cys-111, and Cys-226/Cys-232. Substrate contacts are provided by Asn-118 and Tyr-136. Asn-118 is a glycosylation site (N-linked (GlcNAc...) asparagine). The N-linked (GlcNAc...) asparagine glycan is linked to Asn-137. A divalent metal cation is bound by residues His-147, Asp-151, His-157, His-181, and Asp-185. The tract at residues 147–196 is substrate binding; it reads HFMGDIHQPLHVSYASDKGGNTIEVHWYTRKANLHHIWDSNIIETAEADL. Asn-211 is a glycosylation site (N-linked (GlcNAc...) asparagine). Positions 283 to 290 are cleaved as a propeptide — removed in mature form; sequence ATLNRIFG.

It belongs to the nuclease type I family. As to quaternary structure, monomer. The cofactor is Mn(2+). Ca(2+) serves as cofactor. Requires Zn(2+) as cofactor. In terms of processing, N-glycosylation is required for enzymatic stability and activity.

It catalyses the reaction Endonucleolytic cleavage to 5'-phosphomononucleotide and 5'-phosphooligonucleotide end-products.. SsDNase activity is inhibited by the divalent cation chelator EDTA and the reducing agent DTT. Divalent metal ions (e.g. Ca(2+), Mg(2+) and Zn(2+)) and DTT represses RNase activity. RNase activity is enhanced by EDTA. Also repressed by vanadate (VO(4)(3-)) and phosphate (PO(4)(3-)) by occupying the active site. Endonuclease mostly active on RNA and ssDNA, and to a lower extent, on dsDNA. Can cleave mismatch regions in heteroduplex DNA containing single base pair mismatches or insertion/deletion bases. In contradiction with PubMed:22506810, cannot hydrolyze single-stranded DNA and does not cleave mismatches. This is Endonuclease 2 from Arabidopsis thaliana (Mouse-ear cress).